The following is a 146-amino-acid chain: Probable calcium-binding protein CML40 (146 aa).

The region spanning 7-42 is the EF-hand 1 domain; sequence NKRDEYQRVFSCFDKSHQGKVSVSTIERCVDAIKSG. Residues 44-65 are disordered; the sequence is RAVVDQEDTTNPNPEESTDDKS. The EF-hand 2 domain occupies 116–146; the sequence is KSLKDCEVMISQFDINRDGIINFDEFRAMMQ. Ca(2+)-binding residues include D129, N131, D133, and E140.

Potential calcium sensor. The protein is Probable calcium-binding protein CML40 (CML40) of Arabidopsis thaliana (Mouse-ear cress).